Here is a 321-residue protein sequence, read N- to C-terminus: Probable transaldolase (321 aa).

The active-site Schiff-base intermediate with substrate is Lys-133.

This sequence belongs to the transaldolase family. Type 1 subfamily. As to quaternary structure, homodimer.

It localises to the cytoplasm. It catalyses the reaction D-sedoheptulose 7-phosphate + D-glyceraldehyde 3-phosphate = D-erythrose 4-phosphate + beta-D-fructose 6-phosphate. It participates in carbohydrate degradation; pentose phosphate pathway; D-glyceraldehyde 3-phosphate and beta-D-fructose 6-phosphate from D-ribose 5-phosphate and D-xylulose 5-phosphate (non-oxidative stage): step 2/3. Its function is as follows. Transaldolase is important for the balance of metabolites in the pentose-phosphate pathway. This chain is Probable transaldolase (tal), found in Dictyostelium discoideum (Social amoeba).